We begin with the raw amino-acid sequence, 470 residues long: Ribulose bisphosphate carboxylase large chain (470 aa).

Residues Asn115 and Thr165 each coordinate substrate. Lys167 (proton acceptor) is an active-site residue. Lys169 provides a ligand contact to substrate. Mg(2+) is bound by residues Lys193, Asp195, and Glu196. Lys193 carries the post-translational modification N6-carboxylysine. His286 serves as the catalytic Proton acceptor. The substrate site is built by Arg287, His319, and Ser371.

This sequence belongs to the RuBisCO large chain family. Type I subfamily. As to quaternary structure, heterohexadecamer of 8 large chains and 8 small chains. Mg(2+) serves as cofactor.

The protein localises to the carboxysome. The catalysed reaction is 2 (2R)-3-phosphoglycerate + 2 H(+) = D-ribulose 1,5-bisphosphate + CO2 + H2O. It catalyses the reaction D-ribulose 1,5-bisphosphate + O2 = 2-phosphoglycolate + (2R)-3-phosphoglycerate + 2 H(+). RuBisCO catalyzes two reactions: the carboxylation of D-ribulose 1,5-bisphosphate, the primary event in carbon dioxide fixation, as well as the oxidative fragmentation of the pentose substrate in the photorespiration process. Both reactions occur simultaneously and in competition at the same active site. The polypeptide is Ribulose bisphosphate carboxylase large chain (Synechococcus sp. (strain CC9902)).